The chain runs to 509 residues: Glycerol kinase (509 aa).

Residue Thr12 coordinates ADP. ATP is bound by residues Thr12, Thr13, and Ser14. Position 12 (Thr12) interacts with sn-glycerol 3-phosphate. An ADP-binding site is contributed by Arg16. Residues Arg82, Glu83, Tyr134, and Asp245 each contribute to the sn-glycerol 3-phosphate site. Residues Arg82, Glu83, Tyr134, Asp245, and Gln246 each contribute to the glycerol site. ADP contacts are provided by Thr267 and Gly311. Residues Thr267, Gly311, Gln315, and Gly412 each contribute to the ATP site. ADP is bound by residues Gly412 and Asn416.

Belongs to the FGGY kinase family.

The catalysed reaction is glycerol + ATP = sn-glycerol 3-phosphate + ADP + H(+). The protein operates within polyol metabolism; glycerol degradation via glycerol kinase pathway; sn-glycerol 3-phosphate from glycerol: step 1/1. Its activity is regulated as follows. Inhibited by fructose 1,6-bisphosphate (FBP). Its function is as follows. Key enzyme in the regulation of glycerol uptake and metabolism. Catalyzes the phosphorylation of glycerol to yield sn-glycerol 3-phosphate. This chain is Glycerol kinase, found in Rhizorhabdus wittichii (strain DSM 6014 / CCUG 31198 / JCM 15750 / NBRC 105917 / EY 4224 / RW1) (Sphingomonas wittichii).